A 285-amino-acid polypeptide reads, in one-letter code: Probable endonuclease 4 (285 aa).

Positions 69, 109, 145, 179, 182, 216, 229, 231, and 261 each coordinate Zn(2+).

This sequence belongs to the AP endonuclease 2 family. Zn(2+) serves as cofactor.

The enzyme catalyses Endonucleolytic cleavage to 5'-phosphooligonucleotide end-products.. Its function is as follows. Endonuclease IV plays a role in DNA repair. It cleaves phosphodiester bonds at apurinic or apyrimidinic (AP) sites, generating a 3'-hydroxyl group and a 5'-terminal sugar phosphate. This Citrobacter koseri (strain ATCC BAA-895 / CDC 4225-83 / SGSC4696) protein is Probable endonuclease 4.